The sequence spans 170 residues: Non-specific lipid transfer protein GPI-anchored 5 (170 aa).

Residues 1-24 (MKMEMGLVFLTVFMAVMSSTMVSA) form the signal peptide. 4 cysteine pairs are disulfide-bonded: C28–C69, C38–C53, C54–C95, and C67–C105. 4 N-linked (GlcNAc...) asparagine glycosylation sites follow: N45, N84, N124, and N130. The segment at 105 to 148 (CNTGGGGGGSTSDSPAESPNSSGPGNGSKTVPVGEGDGPPSSDG) is disordered. S146 carries the GPI-anchor amidated serine lipid modification. Residues 147–170 (DGSSIKFSFPLIAFFSAVSYMAIF) constitute a propeptide, removed in mature form.

Belongs to the plant LTP family. Expressed in seedlings, preferentially in the endodermis of hypocotyls and roots, as well as in anthers, sepals and flower tori.

Its subcellular location is the cell membrane. Lipid transfer protein involved in seed and ovule maturation and development, probably by regulating the fatty acids homeostasis during suberin and sporopollenin biosynthesis or deposition. Contributes to pre-invasive defense against some non-host powdery mildew pathogens by preventing the penetration of the epidermal cell wall by the fungal agents (e.g. Blumeria graminis f. sp. hordei (Bgh)). This chain is Non-specific lipid transfer protein GPI-anchored 5, found in Arabidopsis thaliana (Mouse-ear cress).